The following is a 151-amino-acid chain: Ribosomal RNA large subunit methyltransferase H (151 aa).

S-adenosyl-L-methionine-binding positions include leucine 73, glycine 100, and 119-124 (LSKMTL).

This sequence belongs to the RNA methyltransferase RlmH family. Homodimer.

The protein localises to the cytoplasm. The catalysed reaction is pseudouridine(1915) in 23S rRNA + S-adenosyl-L-methionine = N(3)-methylpseudouridine(1915) in 23S rRNA + S-adenosyl-L-homocysteine + H(+). Functionally, specifically methylates the pseudouridine at position 1915 (m3Psi1915) in 23S rRNA. This is Ribosomal RNA large subunit methyltransferase H from Campylobacter lari (strain RM2100 / D67 / ATCC BAA-1060).